The primary structure comprises 256 residues: Small ribosomal subunit protein uS2 (256 aa).

This sequence belongs to the universal ribosomal protein uS2 family.

This chain is Small ribosomal subunit protein uS2, found in Acidiphilium cryptum (strain JF-5).